Here is a 622-residue protein sequence, read N- to C-terminus: WD repeat-containing protein 48 (622 aa).

Phosphotyrosine is present on tyrosine 28. WD repeat units lie at residues 28–67 (YNRN…QDPY), 73–112 (HHTD…CMST), 115–154 (THKD…ALTA), 166–205 (GNKD…KLMK), 208–247 (GHTD…CIAT), 250–289 (VHDE…IRVL), 292–334 (EEKA…NFRA), and 358–397 (KGGA…GFSS). An N6-acetyllysine modification is found at lysine 214. The residue at position 523 (lysine 523) is an N6-acetyllysine. The disordered stretch occupies residues 552–573 (LDNESQTTSSSNNEKPGEQEKE). A compositionally biased stretch (low complexity) spans 554 to 565 (NESQTTSSSNNE). Threonine 558 carries the post-translational modification Phosphothreonine.

It belongs to the WD repeat WDR48 family. In terms of assembly, interacts with USP46. Interacts with USP1. Interacts with USP12. Component of the USP12-WDR20-WDR48 deubiquitinating complex. Component of the USP12-DMWD-WDR48 deubiquitinating complex. Interacts with PHLPP1. Interacts with RAD51AP1; the interaction is direct and promotes formation of a trimeric complex with RAD51 via RAD51AP1. Interacts with ATAD5; the interaction regulates USP1-mediated PCNA deubiquitination. Interacts with RAD51; the interaction is enhanced under replication stress. Interacts with ITCH; the interaction is more efficient when both USP12 and WDR48/UAF1 are involved and may facilitate recruitment of the USP12 deubiquitinating complex to Notch.

It is found in the nucleus. The protein resides in the cytoplasm. It localises to the lysosome. The protein localises to the late endosome. Regulator of deubiquitinating complexes, which acts as a strong activator of USP1, USP12 and USP46. Enhances the USP1-mediated deubiquitination of FANCD2; USP1 being almost inactive by itself. Activates deubiquitination by increasing the catalytic turnover without increasing the affinity of deubiquitinating enzymes for the substrate. Also activates deubiquitinating activity of complexes containing USP12. Docks at the distal end of the USP12 fingers domain and induces a cascade of structural changes leading to the activation of the enzyme. Together with RAD51AP1, promotes DNA repair by stimulating RAD51-mediated homologous recombination. Binds single-stranded DNA (ssDNA) and double-stranded DNA (dsDNA). DNA-binding is required both for USP1-mediated deubiquitination of FANCD2 and stimulation of RAD51-mediated homologous recombination: both WDR48/UAF1 and RAD51AP1 have coordinated role in DNA-binding during these processes. Together with ATAD5 and by regulating USP1 activity, has a role in PCNA-mediated translesion synthesis (TLS) by deubiquitinating monoubiquitinated PCNA. Together with ATAD5, has a role in recruiting RAD51 to stalled forks during replication stress. This chain is WD repeat-containing protein 48 (WDR48), found in Macaca fascicularis (Crab-eating macaque).